Reading from the N-terminus, the 96-residue chain is Small ribosomal subunit protein bS6 (96 aa).

Belongs to the bacterial ribosomal protein bS6 family.

Binds together with bS18 to 16S ribosomal RNA. The sequence is that of Small ribosomal subunit protein bS6 from Streptococcus pyogenes serotype M1.